We begin with the raw amino-acid sequence, 809 residues long: Glycerol-3-phosphate acyltransferase (809 aa).

The HXXXXD motif signature appears at 306-311 (HRSHMD).

The protein belongs to the GPAT/DAPAT family.

It localises to the cell inner membrane. It carries out the reaction sn-glycerol 3-phosphate + an acyl-CoA = a 1-acyl-sn-glycero-3-phosphate + CoA. Its pathway is phospholipid metabolism; CDP-diacylglycerol biosynthesis; CDP-diacylglycerol from sn-glycerol 3-phosphate: step 1/3. The chain is Glycerol-3-phosphate acyltransferase from Vibrio vulnificus (strain YJ016).